The chain runs to 377 residues: Nitric oxide reductase FlRd-NAD(+) reductase (377 aa).

Belongs to the FAD-dependent oxidoreductase family. FAD serves as cofactor.

It is found in the cytoplasm. It catalyses the reaction 2 reduced [nitric oxide reductase rubredoxin domain] + NAD(+) + H(+) = 2 oxidized [nitric oxide reductase rubredoxin domain] + NADH. It participates in nitrogen metabolism; nitric oxide reduction. Functionally, one of at least two accessory proteins for anaerobic nitric oxide (NO) reductase. Reduces the rubredoxin moiety of NO reductase. The sequence is that of Nitric oxide reductase FlRd-NAD(+) reductase from Escherichia coli O6:H1 (strain CFT073 / ATCC 700928 / UPEC).